The sequence spans 284 residues: MTAQIIDGKAIAQSIRTKLSEKVTARKEAGQRIPGLAVVLVGADPASQVYVGSKRKACEEVGFISRSYDLETSCSEDELLSLIDSLNEDPTIDGILVQLPLPAHIEDSKVIERIRPDKDVDGFHPYNVGRLAQRIPVLRSCTPMGIMTLIKSTGVDTYGLDAVVVGASNIVGRPMTLELLLAGCTTTTCHRFTKNLEQKIRIADLVVVAVGKPGFIPGEWIKPGAIVIDVGINRLDNGTLVGDVQYDVAAQNASFITPVPGGVGPMTIASLLENTLYAAEQYHD.

Residues 166–168 (GAS) and I232 each bind NADP(+).

It belongs to the tetrahydrofolate dehydrogenase/cyclohydrolase family. Homodimer.

It carries out the reaction (6R)-5,10-methylene-5,6,7,8-tetrahydrofolate + NADP(+) = (6R)-5,10-methenyltetrahydrofolate + NADPH. The enzyme catalyses (6R)-5,10-methenyltetrahydrofolate + H2O = (6R)-10-formyltetrahydrofolate + H(+). It functions in the pathway one-carbon metabolism; tetrahydrofolate interconversion. Its function is as follows. Catalyzes the oxidation of 5,10-methylenetetrahydrofolate to 5,10-methenyltetrahydrofolate and then the hydrolysis of 5,10-methenyltetrahydrofolate to 10-formyltetrahydrofolate. This Shewanella baltica (strain OS195) protein is Bifunctional protein FolD.